The sequence spans 96 residues: Co-chaperonin GroES (96 aa).

The protein belongs to the GroES chaperonin family. Heptamer of 7 subunits arranged in a ring. Interacts with the chaperonin GroEL.

The protein localises to the cytoplasm. Its function is as follows. Together with the chaperonin GroEL, plays an essential role in assisting protein folding. The GroEL-GroES system forms a nano-cage that allows encapsulation of the non-native substrate proteins and provides a physical environment optimized to promote and accelerate protein folding. GroES binds to the apical surface of the GroEL ring, thereby capping the opening of the GroEL channel. This Teredinibacter turnerae (strain ATCC 39867 / T7901) protein is Co-chaperonin GroES.